We begin with the raw amino-acid sequence, 699 residues long: SPX domain-containing membrane protein At4g22990 (699 aa).

The SPX domain occupies 2 to 145 (VAFGKKLKER…GYRFTNYYVK (144 aa)). 6 helical membrane-spanning segments follow: residues 249–269 (FMSL…TYII), 280–300 (LGAA…AQLF), 317–337 (LIFS…AFDF), 339–358 (SIAV…ARAV), 377–397 (AGFV…AGLL), and 413–433 (LPGW…AISF). Positions 475 to 490 (IEEQGEDECDGSEEAS) are enriched in acidic residues. The segment at 475-494 (IEEQGEDECDGSEEASEDSR) is disordered. 5 helical membrane passes run 515–535 (LLIY…SSVI), 546–566 (SVAI…LVVG), 578–598 (ILLV…HVVV), 606–626 (VCSG…NLSL), and 671–691 (MLLN…IVAT).

Belongs to the major facilitator superfamily.

Its subcellular location is the membrane. This Arabidopsis thaliana (Mouse-ear cress) protein is SPX domain-containing membrane protein At4g22990.